The following is a 1863-amino-acid chain: MECQEFIVLYTHQKMKKSKVWQDGVLKITHLGNKAILYDDKGACLESLFLKCLEVKPGDDLESERYLITVEEAKAVGSRAVEPDGSREALESGSRTLVSSSRSLGCQPSGLKRKATGFQRPYKMPKKVTITENSEPAASLGDENPGPPGPRLLPTFSSTLPLFPTVGQKDLTPVSTDNQSPITFSNRERSDTPLSLPSSYFKINTNTLGKEDKLCFPVSSETKHSDSLLASEPMRRNGLDSHCPGVSQNVRSKAQILALLKSSSTNRKDLHGEIPGHFPKIEPQGCLNIISKPEEDYAETQSIGNLRCEQQSENPTRTTSRWARYLPSQRSPPCSAADENDTEDKPEAQEDVNIFNLSELLQKKSELFETCSKKGELHSEDKPVDNTCQYWNQEDNLAPSFCKNSSVLVSCSSKENASLLSESDIQYSSKVPVNQHEKVWTREGSQGADADAALEPEYRPVSPLPEIGHKQTEVEASLSTSSRISDDIADMGSKSNADREDLKTVHKAVQPFLEVSFNLSNFETSDTDEASQEDSRLSQDSERWEKEAVLTDDSCVQKSCEDIGCREIVGKLPLLSSTDDEPKEALPADGTLLSEFCDRTCVGFNSGPHGDVKTGKALEGQCHSDTGSSLDSSLEWSEDVAGDSREDASQSIQGNAINCGGVSPSKKPRGVNRSLYSPYLLTAVTDPAPENSDLLSEARKSPAIEVSRALLECPCEHRASQQPVEFQGHQVKGSATSGVMVRGHSLQRGCTQFPDSIDYENFLTDTCVWTPGLPSTYGQTDFLQVISPEQKIPALSPAPTFSFNTRNEDTVLELSEESLKTRTLPGLKTIGFQDSKNLQRFPFLSGASAPFATLPADDGPAVLDPCSFMIDDDAREPSGSSMLNLCEESGLSFDLGLEGQGGTPGGVSLLPKSSTQSKWLKYQNPPQCNSTAPNRLASEVTEGLFAEAVSGLHFSHTSESESSVDPVRLQMIKGLLHQQQQDLVSRKQAFSLTLNQTCKTQEHETVLGSSASKNCRAKDLQEINNSDLCFPNGQKIISAYLPQRQVHIPAVFQSPAHYRQVFTASIIEHLNILLFELAQRLYKALSKVDISFYTSSKGETMRSGKNNSPSCHHNQPAKLVMVKKEGPNKGRLFYTCDKSKDNQCKFFKWLEEVTPGQLPQNTSQSTMVFNDIKSIGSYLRSQKVPVYEECQLLLRRGFDFQRKQCGKLKKLTTVNPDFYSETKSKIYLKLSRRESSSVYSKGDLWVISKTLDFELDTFIACSAFFGPSSVNEVELLPLKGYFPSNWPTNITVHALLVCNASTELTTLQNIQDYFNPAALPLMPYLLAMSQSATVSSKNISKRKFIPPAITSIKTKTELHLGATLQLARELINVHRLNKDQATALIQIAQMMASQGSDEDALEPFGHSLPITVIHGVFGAGKSYLLAVVILFLVELFEKCDSGTVGNARPWKVLVSSSTNVAVDRVLLGLLSLGFEKFIRVGSVRKIAKPVLPYSLHAGSDNESEQLKELNALLKEELTPIERVYVRKSIEQHKLGTNRVLLKQVRVVGVTCAACAFPCLNDLKFPVVVLDECSQMTEPASLLPIARFQCEKLILVGDPKQLPPTIQGSDAAHENGLEQTLFDRLCLMGHKPVLLRTQYRCHPAISAIANDLFYEGSLVNGISERERSPVLEWLPTLCFYNVTGAEQVERENSFVNVAEATFTLKLIQSLMASGVESCMIGVITLYKSQMYKICNLLSAVDVGHPDVKAVQVSTVDAFQGAEKEITILSCVRTRQVGFIDSEKRMNVALTRGRRHLLIVGSLSCLRKNRLWGRVIQHCEGREDGLQHASQCEPQLDHLLKDYLEKQAEEKQKKKEKEKSKDKSH.

Disordered stretches follow at residues 78–110 (SRAV…QPSG), 132–196 (ENSE…PLSL), and 300–349 (TQSI…PEAQ). Over residues 81–90 (VEPDGSREAL) the composition is skewed to basic and acidic residues. Positions 92 to 105 (SGSRTLVSSSRSLG) are enriched in low complexity. Composition is skewed to polar residues over residues 173 to 185 (PVST…ITFS) and 300 to 321 (TQSI…TTSR). 2 positions are modified to phosphoserine: S331 and S445. Disordered regions lie at residues 460 to 496 (PVSP…SKSN), 524 to 545 (TSDT…ERWE), and 610 to 664 (GDVK…GVSP). Basic and acidic residues predominate over residues 533–545 (EDSRLSQDSERWE). Zn(2+)-binding residues include C1111, H1113, C1136, and C1144. The GRF-type zinc finger occupies 1111–1153 (CHHNQPAKLVMVKKEGPNKGRLFYTCDKSKDNQCKFFKWLEEV).

In terms of assembly, interacts with DNA repair protein RAD51; the interaction promotes RAD51 strand exchange activity. Also interacts with DNA repair proteins EXO1 and BRCA1; the interactions are increased following DNA damage induction.

Its subcellular location is the nucleus. The enzyme catalyses ATP + H2O = ADP + phosphate + H(+). It catalyses the reaction Couples ATP hydrolysis with the unwinding of duplex DNA at the replication fork by translocating in the 5'-3' direction. This creates two antiparallel DNA single strands (ssDNA). The leading ssDNA polymer is the template for DNA polymerase III holoenzyme which synthesizes a continuous strand.. Functionally, 5'-3' DNA helicase which is recruited to sites of DNA damage and promotes repair of replication-blocking DNA lesions through stimulation of homologous recombination (HR). Promotes HR by directly stimulating RAD51-mediated strand exchange activity. Not required to load RAD51 at sites of DNA damage but promotes recombinational repair after RAD51 recruitment. Also promotes HR by positively regulating EXO1-mediated DNA end resection of DNA double-strand breaks. Required for recruitment of replication protein RPA2 to DNA damage sites. Promotes the initiation of the G2/M checkpoint but not its maintenance. Catalyzes Holliday junction branch migration and dissociation of D-loops and DNA flaps. The polypeptide is 5'-3' DNA helicase ZGRF1 (Zgrf1) (Mus musculus (Mouse)).